A 625-amino-acid polypeptide reads, in one-letter code: Threonine--tRNA ligase (625 aa).

Residues 1–149 (MRVLLIHAKR…RNYEAKTTAR (149 aa)) are editing domain. Catalytic regions lie at residues 197–494 (NPVN…PYIP) and 198–494 (PVNK…PYIP). Cysteine 291, histidine 342, and histidine 463 together coordinate Zn(2+).

Belongs to the class-II aminoacyl-tRNA synthetase family. As to quaternary structure, homodimer. Requires Zn(2+) as cofactor.

The protein resides in the cytoplasm. It carries out the reaction tRNA(Thr) + L-threonine + ATP = L-threonyl-tRNA(Thr) + AMP + diphosphate + H(+). In terms of biological role, catalyzes the attachment of threonine to tRNA(Thr) in a two-step reaction: L-threonine is first activated by ATP to form Thr-AMP and then transferred to the acceptor end of tRNA(Thr). Also edits incorrectly charged L-seryl-tRNA(Thr). The protein is Threonine--tRNA ligase of Hyperthermus butylicus (strain DSM 5456 / JCM 9403 / PLM1-5).